A 371-amino-acid chain; its full sequence is Cytochrome b (371 aa).

Transmembrane regions (helical) follow at residues 25–45 (FGSM…FLAV), 69–90 (WLMQ…YIHI), 105–125 (WMSG…GYVL), and 170–190 (FFAL…LHII). 2 residues coordinate heme b: H75 and H89. Heme b-binding residues include H174 and H188. H193 is a binding site for a ubiquinone. 4 helical membrane passes run 218 to 238 (YKDL…VSFF), 280 to 300 (LGGA…PLTH), 312 to 332 (LSQL…WAAT), and 339 to 358 (YIII…ISTP).

Belongs to the cytochrome b family. In terms of assembly, the cytochrome bc1 complex contains 3 respiratory subunits (MT-CYB, CYC1 and UQCRFS1), 2 core proteins (UQCRC1 and UQCRC2) and probably 6 low-molecular weight proteins. Heme b is required as a cofactor.

It is found in the mitochondrion inner membrane. Its function is as follows. Component of the ubiquinol-cytochrome c reductase complex (complex III or cytochrome b-c1 complex) that is part of the mitochondrial respiratory chain. The b-c1 complex mediates electron transfer from ubiquinol to cytochrome c. Contributes to the generation of a proton gradient across the mitochondrial membrane that is then used for ATP synthesis. The protein is Cytochrome b (MT-CYB) of Python regius (Ball python).